We begin with the raw amino-acid sequence, 398 residues long: CCA-adding enzyme (398 aa).

ATP is bound by residues glycine 32 and arginine 35. The CTP site is built by glycine 32 and arginine 35. Mg(2+) contacts are provided by aspartate 45 and aspartate 47. ATP is bound by residues arginine 116, aspartate 159, arginine 162, arginine 165, and arginine 168. CTP contacts are provided by arginine 116, aspartate 159, arginine 162, arginine 165, and arginine 168.

Belongs to the tRNA nucleotidyltransferase/poly(A) polymerase family. Bacterial CCA-adding enzyme type 3 subfamily. Homodimer. Mg(2+) serves as cofactor.

It catalyses the reaction a tRNA precursor + 2 CTP + ATP = a tRNA with a 3' CCA end + 3 diphosphate. The catalysed reaction is a tRNA with a 3' CCA end + 2 CTP + ATP = a tRNA with a 3' CCACCA end + 3 diphosphate. Catalyzes the addition and repair of the essential 3'-terminal CCA sequence in tRNAs without using a nucleic acid template. Adds these three nucleotides in the order of C, C, and A to the tRNA nucleotide-73, using CTP and ATP as substrates and producing inorganic pyrophosphate. tRNA 3'-terminal CCA addition is required both for tRNA processing and repair. Also involved in tRNA surveillance by mediating tandem CCA addition to generate a CCACCA at the 3' terminus of unstable tRNAs. While stable tRNAs receive only 3'-terminal CCA, unstable tRNAs are marked with CCACCA and rapidly degraded. In Lactobacillus johnsonii (strain CNCM I-12250 / La1 / NCC 533), this protein is CCA-adding enzyme.